Here is a 117-residue protein sequence, read N- to C-terminus: Large ribosomal subunit protein bL20c (117 aa).

This sequence belongs to the bacterial ribosomal protein bL20 family.

Its subcellular location is the plastid. It is found in the chloroplast. Functionally, binds directly to 23S ribosomal RNA and is necessary for the in vitro assembly process of the 50S ribosomal subunit. It is not involved in the protein synthesizing functions of that subunit. The sequence is that of Large ribosomal subunit protein bL20c from Draba nemorosa (Woodland whitlowgrass).